The primary structure comprises 446 residues: Adenylosuccinate synthetase 1 (446 aa).

GTP is bound by residues 20–26 (GDEGKGK) and 48–50 (GHT). Asp21 (proton acceptor) is an active-site residue. Mg(2+) is bound by residues Asp21 and Gly48. IMP contacts are provided by residues 21–24 (DEGK), 46–49 (NAGH), Thr137, Arg151, Gln232, Thr247, and Arg319. The active-site Proton donor is His49. 315–321 (SVTGRPR) lines the substrate pocket. Residues Arg321, 347–349 (KLD), and 429–431 (STG) each bind GTP.

It belongs to the adenylosuccinate synthetase family. As to quaternary structure, homodimer. Mg(2+) serves as cofactor.

The protein resides in the cytoplasm. It catalyses the reaction IMP + L-aspartate + GTP = N(6)-(1,2-dicarboxyethyl)-AMP + GDP + phosphate + 2 H(+). The protein operates within purine metabolism; AMP biosynthesis via de novo pathway; AMP from IMP: step 1/2. Plays an important role in the de novo pathway of purine nucleotide biosynthesis. Catalyzes the first committed step in the biosynthesis of AMP from IMP. This chain is Adenylosuccinate synthetase 1, found in Cupriavidus pinatubonensis (strain JMP 134 / LMG 1197) (Cupriavidus necator (strain JMP 134)).